Reading from the N-terminus, the 550-residue chain is CTP synthase (550 aa).

The segment at 1–277 (MNGSADAGPR…GRAVERALGL (277 aa)) is amidoligase domain. Ser-23 is a CTP binding site. Ser-23 provides a ligand contact to UTP. Residue 24 to 29 (SLGKGI) coordinates ATP. Tyr-64 contacts L-glutamine. Position 81 (Asp-81) interacts with ATP. Asp-81 and Glu-151 together coordinate Mg(2+). CTP-binding positions include 158-160 (DIE), 198-203 (KTKPTQ), and Lys-234. UTP is bound by residues 198–203 (KTKPTQ) and Lys-234. The region spanning 302–549 (KIAIAGKYVK…VEAALAYQER (248 aa)) is the Glutamine amidotransferase type-1 domain. Gly-364 is a binding site for L-glutamine. Cys-391 serves as the catalytic Nucleophile; for glutamine hydrolysis. Residues 392-395 (LGLQ), Glu-415, and Arg-472 each bind L-glutamine. Catalysis depends on residues His-522 and Glu-524.

Belongs to the CTP synthase family. As to quaternary structure, homotetramer.

It carries out the reaction UTP + L-glutamine + ATP + H2O = CTP + L-glutamate + ADP + phosphate + 2 H(+). The catalysed reaction is L-glutamine + H2O = L-glutamate + NH4(+). It catalyses the reaction UTP + NH4(+) + ATP = CTP + ADP + phosphate + 2 H(+). Its pathway is pyrimidine metabolism; CTP biosynthesis via de novo pathway; CTP from UDP: step 2/2. Its activity is regulated as follows. Allosterically activated by GTP, when glutamine is the substrate; GTP has no effect on the reaction when ammonia is the substrate. The allosteric effector GTP functions by stabilizing the protein conformation that binds the tetrahedral intermediate(s) formed during glutamine hydrolysis. Inhibited by the product CTP, via allosteric rather than competitive inhibition. Its function is as follows. Catalyzes the ATP-dependent amination of UTP to CTP with either L-glutamine or ammonia as the source of nitrogen. Regulates intracellular CTP levels through interactions with the four ribonucleotide triphosphates. In Thermus thermophilus (strain ATCC BAA-163 / DSM 7039 / HB27), this protein is CTP synthase.